A 199-amino-acid polypeptide reads, in one-letter code: MPIGYPLVKAMDKDRFISYFLINNALLNERVIFLCNYEDATDESIYIGMLLYLESENSQKPVSFYINSSITFPNLCFGLYDTILQIKADIVTICLGLAGGMSSLILAAGTKGQRFALPNSRIMMQEPLIDGGVNGQATDLAIEAKELMDTKEILINLYHERTGQPKPVIEKDLQRPRYFSAQAAKEYGFIDSLLMASNG.

The protein belongs to the peptidase S14 family. As to quaternary structure, component of the chloroplastic Clp protease core complex.

It localises to the plastid. The protein localises to the cyanelle. Functionally, has lost the two conserved residues (Ser and His) proposed to be part of the active site. Therefore it could be inactive. This chain is Putative ATP-dependent Clp protease proteolytic subunit-like (clpP-B), found in Cyanophora paradoxa.